Here is a 470-residue protein sequence, read N- to C-terminus: Glutamate--tRNA ligase (470 aa).

The 'HIGH' region motif lies at 9-19 (PSPTGFLHVGG). The short motif at 236–240 (RLSKR) is the 'KMSKS' region element. Lys-239 is a binding site for ATP.

Belongs to the class-I aminoacyl-tRNA synthetase family. Glutamate--tRNA ligase type 1 subfamily. Monomer.

It localises to the cytoplasm. The catalysed reaction is tRNA(Glu) + L-glutamate + ATP = L-glutamyl-tRNA(Glu) + AMP + diphosphate. In terms of biological role, catalyzes the attachment of glutamate to tRNA(Glu) in a two-step reaction: glutamate is first activated by ATP to form Glu-AMP and then transferred to the acceptor end of tRNA(Glu). The sequence is that of Glutamate--tRNA ligase from Legionella pneumophila (strain Lens).